Consider the following 481-residue polypeptide: UDP-glycosyltransferase 72B3 (481 aa).

Residues Ser-277, Ala-347–Gln-349, His-364–Glu-372, and Tyr-386–Gln-389 contribute to the UDP-alpha-D-glucose site.

This sequence belongs to the UDP-glycosyltransferase family.

Its function is as follows. Possesses low quercetin 3-O-glucosyltransferase activity in vitro. This chain is UDP-glycosyltransferase 72B3 (UGT72B3), found in Arabidopsis thaliana (Mouse-ear cress).